Reading from the N-terminus, the 442-residue chain is Lipoyl synthase, apicoplast (442 aa).

A signal peptide spans 1 to 23; that stretch reads MRVLTPSLYIYAFFIFCVRFKCG. Positions 104-154 are disordered; that stretch reads LGEHQLKGKRKESATNVEKEKKEKEQQEERLPVPKVGNKMPEKKPDWFHVP. Over residues 114 to 135 the composition is skewed to basic and acidic residues; the sequence is KESATNVEKEKKEKEQQEERLP. [4Fe-4S] cluster contacts are provided by C177, C182, C188, C203, C207, C210, and S418. The region spanning 189–407 is the Radical SAM core domain; the sequence is WNIGTATIML…KEEGMKMGFK (219 aa).

This sequence belongs to the radical SAM superfamily. Lipoyl synthase family. [4Fe-4S] cluster serves as cofactor.

The protein localises to the plastid. It localises to the apicoplast. The catalysed reaction is [[Fe-S] cluster scaffold protein carrying a second [4Fe-4S](2+) cluster] + N(6)-octanoyl-L-lysyl-[protein] + 2 oxidized [2Fe-2S]-[ferredoxin] + 2 S-adenosyl-L-methionine + 4 H(+) = [[Fe-S] cluster scaffold protein] + N(6)-[(R)-dihydrolipoyl]-L-lysyl-[protein] + 4 Fe(3+) + 2 hydrogen sulfide + 2 5'-deoxyadenosine + 2 L-methionine + 2 reduced [2Fe-2S]-[ferredoxin]. Its pathway is protein modification; protein lipoylation via endogenous pathway; protein N(6)-(lipoyl)lysine from octanoyl-[acyl-carrier-protein]: step 2/2. Catalyzes the radical-mediated insertion of two sulfur atoms into the C-6 and C-8 positions of the octanoyl moiety bound to the lipoyl domains of lipoate-dependent enzymes, thereby converting the octanoylated domains into lipoylated derivatives. This Plasmodium knowlesi (strain H) protein is Lipoyl synthase, apicoplast.